The primary structure comprises 503 residues: ATP synthase subunit alpha (503 aa).

170–177 (GDRQTGKT) is a binding site for ATP.

Belongs to the ATPase alpha/beta chains family. F-type ATPases have 2 components, CF(1) - the catalytic core - and CF(0) - the membrane proton channel. CF(1) has five subunits: alpha(3), beta(3), gamma(1), delta(1), epsilon(1). CF(0) has three main subunits: a(1), b(2) and c(9-12). The alpha and beta chains form an alternating ring which encloses part of the gamma chain. CF(1) is attached to CF(0) by a central stalk formed by the gamma and epsilon chains, while a peripheral stalk is formed by the delta and b chains.

Its subcellular location is the cell membrane. The enzyme catalyses ATP + H2O + 4 H(+)(in) = ADP + phosphate + 5 H(+)(out). Functionally, produces ATP from ADP in the presence of a proton gradient across the membrane. The alpha chain is a regulatory subunit. The chain is ATP synthase subunit alpha from Brevibacillus brevis (strain 47 / JCM 6285 / NBRC 100599).